A 65-amino-acid chain; its full sequence is NADH dehydrogenase [ubiquinone] 1 alpha subcomplex subunit 1 (65 aa).

Residues 3 to 23 (LVWLEAMLPLGIIGGMLCIMG) traverse the membrane as a helical segment.

The protein belongs to the complex I NDUFA1 subunit family. As to quaternary structure, complex I is composed of at least 49 different subunits.

The protein resides in the mitochondrion inner membrane. In terms of biological role, accessory subunit of the mitochondrial membrane respiratory chain NADH dehydrogenase (Complex I), that is believed not to be involved in catalysis. Complex I functions in the transfer of electrons from NADH to the respiratory chain. The immediate electron acceptor for the enzyme is believed to be ubiquinone. This Arabidopsis thaliana (Mouse-ear cress) protein is NADH dehydrogenase [ubiquinone] 1 alpha subcomplex subunit 1.